Reading from the N-terminus, the 127-residue chain is Anti-adapter protein IraD (127 aa).

It belongs to the GpW/Gp25 family. IraD subfamily. In terms of assembly, interacts with RssB.

The protein resides in the cytoplasm. In terms of biological role, inhibits RpoS proteolysis by regulating RssB activity, thereby increasing the stability of the sigma stress factor RpoS during oxidative stress. Its effect on RpoS stability is due to its interaction with RssB, which probably blocks the interaction of RssB with RpoS, and the consequent delivery of the RssB-RpoS complex to the ClpXP protein degradation pathway. This chain is Anti-adapter protein IraD, found in Escherichia coli O6:K15:H31 (strain 536 / UPEC).